A 25-amino-acid chain; its full sequence is Unknown protein 4 (25 aa).

Basic and acidic residues predominate over residues 1–10 (IEHNAEEIRK). Residues 1–25 (IEHNAEEIRKTAIRTAVQNTAQQTK) are disordered. The span at 16-25 (AVQNTAQQTK) shows a compositional bias: polar residues.

This Lonomia obliqua (Moth) protein is Unknown protein 4.